The primary structure comprises 1637 residues: Acrosomal protein KIAA1210 (1637 aa).

Disordered stretches follow at residues 44–121 (RFSS…LSIS), 141–293 (RTTT…KNEW), 341–404 (PTTT…KKKD), 438–759 (VCGE…SQSE), 865–896 (PKLP…EGST), 935–975 (SKYS…FQPL), 1017–1057 (LQPW…IPSQ), 1090–1137 (FPFQ…SRRA), 1182–1238 (SQTI…SKSF), and 1539–1558 (NKGD…PAFS). A compositionally biased stretch (basic residues) spans 103–114 (HRSKSLKIKSQR). Positions 141–156 (RTTTTFRRRSSQCSST) are enriched in low complexity. Residues 170 to 190 (SESSTQQFSGFSTPATSQGCL) are compositionally biased toward polar residues. The segment covering 229–249 (AKEKTTTKTKEAEQGEQKVDS) has biased composition (basic and acidic residues). The span at 250–261 (TELSSQEQSSKT) shows a compositional bias: low complexity. The span at 341–353 (PTTTEAEVTTVQK) shows a compositional bias: polar residues. Residues 355–374 (PSDKGDVERELADIDVEAQK) are compositionally biased toward basic and acidic residues. The span at 508 to 526 (TGETSSDSKSTSEYESSSE) shows a compositional bias: low complexity. Residues 550–572 (ADDEEDGDDEKEEKDNDDDDEEN) show a composition bias toward acidic residues. Residues 689–698 (DLSSSEQEQQ) are compositionally biased toward low complexity. Composition is skewed to polar residues over residues 745-759 (SPTQ…SQSE), 879-896 (GKQS…EGST), 935-956 (SKYS…STSA), 964-975 (SQPSVTPKFQPL), and 1017-1030 (LQPW…QVSV).

As to quaternary structure, interacts with TOP2B. Predominantly expressed in testis (at protein level).

It is found in the cytoplasmic vesicle. The protein localises to the secretory vesicle. The protein resides in the acrosome. The protein is Acrosomal protein KIAA1210 of Mus musculus (Mouse).